Here is a 492-residue protein sequence, read N- to C-terminus: 6-phosphogluconate dehydrogenase, decarboxylating 2 (492 aa).

NADP(+) is bound by residues 12-17 (GLAVMG), 35-37 (NRT), 77-79 (IKA), and N105. Residues N105 and 131-133 (SGG) contribute to the substrate site. Catalysis depends on K185, which acts as the Proton acceptor. 188–189 (HN) contributes to the substrate binding site. The active-site Proton donor is the E192. Positions 193, 262, 289, 449, and 455 each coordinate substrate.

This sequence belongs to the 6-phosphogluconate dehydrogenase family. In terms of assembly, homodimer.

It carries out the reaction 6-phospho-D-gluconate + NADP(+) = D-ribulose 5-phosphate + CO2 + NADPH. The protein operates within carbohydrate degradation; pentose phosphate pathway; D-ribulose 5-phosphate from D-glucose 6-phosphate (oxidative stage): step 3/3. Catalyzes the oxidative decarboxylation of 6-phosphogluconate to ribulose 5-phosphate and CO(2), with concomitant reduction of NADP to NADPH. The protein is 6-phosphogluconate dehydrogenase, decarboxylating 2 (GND2) of Saccharomyces cerevisiae (strain ATCC 204508 / S288c) (Baker's yeast).